The primary structure comprises 65 residues: Large ribosomal subunit protein bL31 (65 aa).

4 residues coordinate Zn(2+): Cys16, Cys18, Cys36, and Cys39.

This sequence belongs to the bacterial ribosomal protein bL31 family. Type A subfamily. Part of the 50S ribosomal subunit. The cofactor is Zn(2+).

Its function is as follows. Binds the 23S rRNA. This Alkaliphilus metalliredigens (strain QYMF) protein is Large ribosomal subunit protein bL31.